An 873-amino-acid chain; its full sequence is Coatomer subunit gamma-2 (873 aa).

Over residues Met1–Glu11 the composition is skewed to basic and acidic residues. Residues Met1–Asn21 form a disordered region. HEAT repeat units lie at residues Thr64–Asp101, Arg283–Ser320, Ala321–Ser355, Ser356–Arg392, His394–Glu430, and Pro467–Asp504.

Belongs to the COPG family. Oligomeric complex.

Its subcellular location is the cytoplasm. It localises to the golgi apparatus membrane. It is found in the cytoplasmic vesicle. The protein localises to the COPI-coated vesicle membrane. Functionally, the coatomer is a cytosolic protein complex that binds to dilysine motifs and reversibly associates with Golgi non-clathrin-coated vesicles, which further mediate biosynthetic protein transport from the ER, via the Golgi up to the trans Golgi network. Coatomer complex is required for budding from Golgi membranes, and is essential for the retrograde Golgi-to-ER transport of dilysine-tagged proteins. The chain is Coatomer subunit gamma-2 (copg2) from Takifugu rubripes (Japanese pufferfish).